A 383-amino-acid polypeptide reads, in one-letter code: E3 ubiquitin-protein ligase Os04g0590900 (383 aa).

Residues 53–73 (PVFSPLVIAIIGVLASAFLLV) traverse the membrane as a helical segment. A disordered region spans residues 105–129 (GGAGSGGRHGHGQSRSHESWNVSPP). An RING-type; atypical zinc finger spans residues 157 to 199 (CSVCLGEFSDGESLRLLPRCSHAFHQQCIDTWLKSHSNCPLCR). Disordered stretches follow at residues 269-291 (EANGAAEIREEGSPPKRGASSFD) and 320-383 (LLAG…DHPM).

Its subcellular location is the membrane. The catalysed reaction is S-ubiquitinyl-[E2 ubiquitin-conjugating enzyme]-L-cysteine + [acceptor protein]-L-lysine = [E2 ubiquitin-conjugating enzyme]-L-cysteine + N(6)-ubiquitinyl-[acceptor protein]-L-lysine.. The protein operates within protein modification; protein ubiquitination. Its function is as follows. Possesses E3 ubiquitin-protein ligase in vitro. This chain is E3 ubiquitin-protein ligase Os04g0590900, found in Oryza sativa subsp. japonica (Rice).